We begin with the raw amino-acid sequence, 439 residues long: Proline--tRNA ligase (439 aa).

It belongs to the class-II aminoacyl-tRNA synthetase family. ProS type 2 subfamily. As to quaternary structure, homodimer.

The protein resides in the cytoplasm. The enzyme catalyses tRNA(Pro) + L-proline + ATP = L-prolyl-tRNA(Pro) + AMP + diphosphate. Catalyzes the attachment of proline to tRNA(Pro) in a two-step reaction: proline is first activated by ATP to form Pro-AMP and then transferred to the acceptor end of tRNA(Pro). In Nitrobacter winogradskyi (strain ATCC 25391 / DSM 10237 / CIP 104748 / NCIMB 11846 / Nb-255), this protein is Proline--tRNA ligase.